Here is a 116-residue protein sequence, read N- to C-terminus: Large ribosomal subunit protein bL17 (116 aa).

It belongs to the bacterial ribosomal protein bL17 family. In terms of assembly, part of the 50S ribosomal subunit. Contacts protein L32.

The polypeptide is Large ribosomal subunit protein bL17 (Trichodesmium erythraeum (strain IMS101)).